The sequence spans 429 residues: Serine--tRNA ligase (429 aa).

An L-serine-binding site is contributed by 235 to 237; that stretch reads TAE. 266 to 268 contributes to the ATP binding site; the sequence is RSE. Glu-289 is a binding site for L-serine. 353–356 provides a ligand contact to ATP; sequence EISS. Ser-389 is an L-serine binding site.

It belongs to the class-II aminoacyl-tRNA synthetase family. Type-1 seryl-tRNA synthetase subfamily. In terms of assembly, homodimer. The tRNA molecule binds across the dimer.

Its subcellular location is the cytoplasm. It carries out the reaction tRNA(Ser) + L-serine + ATP = L-seryl-tRNA(Ser) + AMP + diphosphate + H(+). The enzyme catalyses tRNA(Sec) + L-serine + ATP = L-seryl-tRNA(Sec) + AMP + diphosphate + H(+). The protein operates within aminoacyl-tRNA biosynthesis; selenocysteinyl-tRNA(Sec) biosynthesis; L-seryl-tRNA(Sec) from L-serine and tRNA(Sec): step 1/1. Functionally, catalyzes the attachment of serine to tRNA(Ser). Is also able to aminoacylate tRNA(Sec) with serine, to form the misacylated tRNA L-seryl-tRNA(Sec), which will be further converted into selenocysteinyl-tRNA(Sec). The protein is Serine--tRNA ligase of Histophilus somni (strain 129Pt) (Haemophilus somnus).